We begin with the raw amino-acid sequence, 517 residues long: Putative thymidine phosphorylase (517 aa).

Belongs to the thymidine/pyrimidine-nucleoside phosphorylase family. Type 2 subfamily.

The enzyme catalyses thymidine + phosphate = 2-deoxy-alpha-D-ribose 1-phosphate + thymine. The chain is Putative thymidine phosphorylase from Legionella pneumophila (strain Corby).